The sequence spans 63 residues: Large ribosomal subunit protein bL28 (63 aa).

This sequence belongs to the bacterial ribosomal protein bL28 family.

This Desulfitobacterium hafniense (strain DSM 10664 / DCB-2) protein is Large ribosomal subunit protein bL28.